The chain runs to 407 residues: Lysosome-associated membrane glycoprotein 1 (407 aa).

The signal sequence occupies residues 1-21; the sequence is MAAPGARRPLLLLLLAGLAHS. The tract at residues 22–189 is first lumenal domain; that stretch reads APALFEVKDN…SKEETRCPQD (168 aa). Topologically, residues 22 to 371 are lumenal; the sequence is APALFEVKDN…VEECVQDGNN (350 aa). Residues Asn-32, Asn-59, Asn-71, Asn-79, Asn-102, Asn-116, Asn-125, Asn-145, Asn-160, and Asn-178 are each glycosylated (N-linked (GlcNAc...) asparagine). A disulfide bond links Cys-36 and Cys-75. Residues Cys-150 and Cys-186 are joined by a disulfide bond. Positions 180–211 are disordered; that stretch reads SKEETRCPQDQPSPTTGPPSPSPPLVPTNPSV. A hinge region spans residues 190–219; that stretch reads QPSPTTGPPSPSPPLVPTNPSVSKYNVTGD. Residues 194–206 are compositionally biased toward pro residues; that stretch reads TTGPPSPSPPLVP. N-linked (GlcNAc...) asparagine glycosylation is found at Asn-215, Asn-220, Asn-233, Asn-241, Asn-271, Asn-283, Asn-297, and Asn-312. A second lumenal domain region spans residues 220–371; that stretch reads NGTCLLASMA…VEECVQDGNN (152 aa). Cys-223 and Cys-260 are oxidised to a cystine. The cysteines at positions 328 and 365 are disulfide-linked. The chain crosses the membrane as a helical span at residues 372-395; sequence MLIPIAVGGALAGLVLIVLIAYLI. Topologically, residues 396-407 are cytoplasmic; it reads GRKRSHAGYQTI.

The protein belongs to the LAMP family. Interacts with ABCB9; this interaction strongly stabilizes ABCB9 and protects ABCB9 against lysosomal degradation. Interacts with FURIN. Interacts with TMEM175; inhibiting the proton channel activity of TMEM175. In terms of processing, O- and N-glycosylated; some of the N-glycans attached to LAMP-1 are polylactosaminoglycans.

The protein resides in the lysosome membrane. Its subcellular location is the endosome membrane. It is found in the late endosome membrane. It localises to the cell membrane. The protein localises to the cytolytic granule membrane. In terms of biological role, lysosomal membrane glycoprotein which plays an important role in lysosome biogenesis, lysosomal pH regulation, autophagy and cholesterol homeostasis. Acts as an important regulator of lysosomal lumen pH regulation by acting as a direct inhibitor of the proton channel TMEM175, facilitating lysosomal acidification for optimal hydrolase activity. Also plays an important role in NK-cells cytotoxicity. Mechanistically, participates in cytotoxic granule movement to the cell surface and perforin trafficking to the lytic granule. In addition, protects NK-cells from degranulation-associated damage induced by their own cytotoxic granule content. Presents carbohydrate ligands to selectins. The sequence is that of Lysosome-associated membrane glycoprotein 1 (Lamp1) from Rattus norvegicus (Rat).